The sequence spans 252 residues: Imidazole glycerol phosphate synthase subunit HisF (252 aa).

Active-site residues include D11 and D130.

It belongs to the HisA/HisF family. Heterodimer of HisH and HisF.

It localises to the cytoplasm. It catalyses the reaction 5-[(5-phospho-1-deoxy-D-ribulos-1-ylimino)methylamino]-1-(5-phospho-beta-D-ribosyl)imidazole-4-carboxamide + L-glutamine = D-erythro-1-(imidazol-4-yl)glycerol 3-phosphate + 5-amino-1-(5-phospho-beta-D-ribosyl)imidazole-4-carboxamide + L-glutamate + H(+). It functions in the pathway amino-acid biosynthesis; L-histidine biosynthesis; L-histidine from 5-phospho-alpha-D-ribose 1-diphosphate: step 5/9. IGPS catalyzes the conversion of PRFAR and glutamine to IGP, AICAR and glutamate. The HisF subunit catalyzes the cyclization activity that produces IGP and AICAR from PRFAR using the ammonia provided by the HisH subunit. This chain is Imidazole glycerol phosphate synthase subunit HisF, found in Thermococcus onnurineus (strain NA1).